We begin with the raw amino-acid sequence, 158 residues long: N5-carboxyaminoimidazole ribonucleotide mutase (158 aa).

Serine 10, aspartate 13, and arginine 40 together coordinate substrate.

This sequence belongs to the AIR carboxylase family. Class I subfamily.

It catalyses the reaction 5-carboxyamino-1-(5-phospho-D-ribosyl)imidazole + H(+) = 5-amino-1-(5-phospho-D-ribosyl)imidazole-4-carboxylate. The protein operates within purine metabolism; IMP biosynthesis via de novo pathway; 5-amino-1-(5-phospho-D-ribosyl)imidazole-4-carboxylate from 5-amino-1-(5-phospho-D-ribosyl)imidazole (N5-CAIR route): step 2/2. Functionally, catalyzes the conversion of N5-carboxyaminoimidazole ribonucleotide (N5-CAIR) to 4-carboxy-5-aminoimidazole ribonucleotide (CAIR). This Saccharolobus solfataricus (strain ATCC 35092 / DSM 1617 / JCM 11322 / P2) (Sulfolobus solfataricus) protein is N5-carboxyaminoimidazole ribonucleotide mutase.